The primary structure comprises 1653 residues: Protein strawberry notch (1653 aa).

Disordered stretches follow at residues 1-46 (MTSK…GRDL), 190-211 (GSPA…GGAI), 237-265 (GSNA…PNPG), 317-345 (NNQK…VKGN), and 883-1043 (SVAD…PSGS). A compositionally biased stretch (acidic residues) spans 11–36 (DADDDNDNFDEDDSGSDFDDDEDPDQ). 2 positions are modified to phosphoserine: Ser24 and Ser26. Residues 194 to 205 (ARSSGNAGTTGS) are compositionally biased toward polar residues. A compositionally biased stretch (low complexity) spans 256–265 (SPTGGIPNPG). Positions 329 to 342 (GSGGPAGGAPGSGV) are enriched in gly residues. The span at 883 to 901 (SVADSTSSLSNNSNITTAA) shows a compositional bias: low complexity. Phosphoserine is present on residues Ser929 and Ser931. Residues 966–975 (IDDEDEDHDV) are compositionally biased toward acidic residues. The span at 980–998 (RSVASDASSDFNPFFSGSD) shows a compositional bias: polar residues. Over residues 1008–1027 (RSKKSKKAQKKSKKKVKKEK) the composition is skewed to basic residues. The stretch at 1064-1125 (LSTQDKIQDL…RKIERLGARL (62 aa)) forms a coiled coil.

Belongs to the SBNO family. In terms of assembly, interacts with vg for function in the wing disk. Interacts with Su(H) for function in the eye disk. As to expression, at stage 8, when the formation of the midline precursor cells depends on Notch signaling, high level of expression is seen in the midline precursor cells and a lower level in the surrounding epidermal cells. Between stages 11 and 14, expression is uniform throughout the epidermis, and at stage 16, high level of expression is restricted to the central nervous system. Expressed in the larval leg, wing and eye imaginal disks. Expression is over the wing disk and accumulates within the pleural region.

The protein resides in the nucleus. Functionally, notch pathway component, may contribute to the specificity between lateral and inductive Notch signaling pathways in the wing disk. Required during many developmental stages including oogenesis, embryogenesis and imaginal development of the eye, wing and leg. Ebi and sno regulate EGFR-dependent Delta transcription in the developing eye, by antagonizing a repressor function of Suppressor of Hairless (Su(H)). They are required in the R-cells for normal cone cell development. In Drosophila melanogaster (Fruit fly), this protein is Protein strawberry notch.